A 453-amino-acid polypeptide reads, in one-letter code: Serine--tRNA ligase (453 aa).

Position 252 to 254 (T252 to E254) interacts with L-serine. ATP contacts are provided by residues R283 to E285 and V299. E306 is a binding site for L-serine. An ATP-binding site is contributed by E370–S373. T405 serves as a coordination point for L-serine.

It belongs to the class-II aminoacyl-tRNA synthetase family. Type-1 seryl-tRNA synthetase subfamily. As to quaternary structure, homodimer. The tRNA molecule binds across the dimer.

The protein localises to the cytoplasm. It catalyses the reaction tRNA(Ser) + L-serine + ATP = L-seryl-tRNA(Ser) + AMP + diphosphate + H(+). It carries out the reaction tRNA(Sec) + L-serine + ATP = L-seryl-tRNA(Sec) + AMP + diphosphate + H(+). Its pathway is aminoacyl-tRNA biosynthesis; selenocysteinyl-tRNA(Sec) biosynthesis; L-seryl-tRNA(Sec) from L-serine and tRNA(Sec): step 1/1. Functionally, catalyzes the attachment of serine to tRNA(Ser). Is also able to aminoacylate tRNA(Sec) with serine, to form the misacylated tRNA L-seryl-tRNA(Sec), which will be further converted into selenocysteinyl-tRNA(Sec). This chain is Serine--tRNA ligase, found in Sulfurisphaera tokodaii (strain DSM 16993 / JCM 10545 / NBRC 100140 / 7) (Sulfolobus tokodaii).